Here is a 156-residue protein sequence, read N- to C-terminus: Small ribosomal subunit protein uS7 (156 aa).

The protein belongs to the universal ribosomal protein uS7 family. In terms of assembly, part of the 30S ribosomal subunit. Contacts proteins S9 and S11.

In terms of biological role, one of the primary rRNA binding proteins, it binds directly to 16S rRNA where it nucleates assembly of the head domain of the 30S subunit. Is located at the subunit interface close to the decoding center, probably blocks exit of the E-site tRNA. The polypeptide is Small ribosomal subunit protein uS7 (Coprothermobacter proteolyticus (strain ATCC 35245 / DSM 5265 / OCM 4 / BT)).